The following is a 262-amino-acid chain: Ribosomal RNA small subunit methyltransferase A (262 aa).

His-16, Leu-18, Gly-43, Glu-64, Asp-89, and Asn-109 together coordinate S-adenosyl-L-methionine.

This sequence belongs to the class I-like SAM-binding methyltransferase superfamily. rRNA adenine N(6)-methyltransferase family. RsmA subfamily.

Its subcellular location is the cytoplasm. It catalyses the reaction adenosine(1518)/adenosine(1519) in 16S rRNA + 4 S-adenosyl-L-methionine = N(6)-dimethyladenosine(1518)/N(6)-dimethyladenosine(1519) in 16S rRNA + 4 S-adenosyl-L-homocysteine + 4 H(+). Functionally, specifically dimethylates two adjacent adenosines (A1518 and A1519) in the loop of a conserved hairpin near the 3'-end of 16S rRNA in the 30S particle. May play a critical role in biogenesis of 30S subunits. The protein is Ribosomal RNA small subunit methyltransferase A of Xanthomonas euvesicatoria pv. vesicatoria (strain 85-10) (Xanthomonas campestris pv. vesicatoria).